We begin with the raw amino-acid sequence, 490 residues long: uncharacterized protein (490 aa).

A helical transmembrane segment spans residues 27 to 47; the sequence is VYVFLTTIILLLSLISTLIII.

It localises to the membrane. This is an uncharacterized protein from Borreliella burgdorferi (strain ATCC 35210 / DSM 4680 / CIP 102532 / B31) (Borrelia burgdorferi).